The chain runs to 391 residues: Recombination and repair protein (391 aa).

Residue 60–67 (GPSKSFKS) participates in ATP binding. Basic and acidic residues predominate over residues 364 to 374 (KSPESKSKSAA). Residues 364–391 (KSPESKSKSAADLETDLEQLSDMEEFNE) form a disordered region. The segment covering 376 to 391 (LETDLEQLSDMEEFNE) has biased composition (acidic residues).

The protein belongs to the RecA family.

Its function is as follows. Important in genetic recombination, DNA repair, and replication. Possesses pairing and strand-transfer activity. Interacts with dda and gene 32 proteins. The polypeptide is Recombination and repair protein (UVSX) (Enterobacteria phage T4 (Bacteriophage T4)).